Consider the following 621-residue polypeptide: Chaperone protein HtpG (621 aa).

The segment at 1–341 is a; substrate-binding; sequence MSNQEYTFQT…SEDLPLNVSR (341 aa). The b stretch occupies residues 342 to 547; it reads EILQQNKILA…GDEPNAMMAN (206 aa). Residues 548 to 621 form a c region; sequence WMRQMGQSVP…RLNSVLLKAL (74 aa).

The protein belongs to the heat shock protein 90 family. As to quaternary structure, homodimer.

The protein resides in the cytoplasm. Functionally, molecular chaperone. Has ATPase activity. The chain is Chaperone protein HtpG from Helicobacter pylori (strain J99 / ATCC 700824) (Campylobacter pylori J99).